The primary structure comprises 498 residues: Probable malate:quinone oxidoreductase 2 (498 aa).

This sequence belongs to the MQO family. It depends on FAD as a cofactor.

It catalyses the reaction (S)-malate + a quinone = a quinol + oxaloacetate. It functions in the pathway carbohydrate metabolism; tricarboxylic acid cycle; oxaloacetate from (S)-malate (quinone route): step 1/1. The sequence is that of Probable malate:quinone oxidoreductase 2 from Staphylococcus epidermidis (strain ATCC 12228 / FDA PCI 1200).